A 231-amino-acid polypeptide reads, in one-letter code: Probable transaldolase (231 aa).

Lysine 83 serves as the catalytic Schiff-base intermediate with substrate.

This sequence belongs to the transaldolase family. Type 3B subfamily.

The protein localises to the cytoplasm. The enzyme catalyses D-sedoheptulose 7-phosphate + D-glyceraldehyde 3-phosphate = D-erythrose 4-phosphate + beta-D-fructose 6-phosphate. It functions in the pathway carbohydrate degradation; pentose phosphate pathway; D-glyceraldehyde 3-phosphate and beta-D-fructose 6-phosphate from D-ribose 5-phosphate and D-xylulose 5-phosphate (non-oxidative stage): step 2/3. Its function is as follows. Transaldolase is important for the balance of metabolites in the pentose-phosphate pathway. The polypeptide is Probable transaldolase (Rhodospirillum centenum (strain ATCC 51521 / SW)).